Reading from the N-terminus, the 187-residue chain is Mitochondrial import receptor subunit TOM20-4 (187 aa).

Methionine 1 bears the N-acetylmethionine mark. Residues 1–160 (MDMQNENERL…QKKTSEFKYD (160 aa)) lie on the Cytoplasmic side of the membrane. The TPR repeat unit spans residues 84-117 (LSFGFLSSDQTEASDNFEKASQFFQLAVEEQPES). A helical transmembrane segment spans residues 161 to 178 (VFGWVILASYVVAWISFA). Topologically, residues 179-187 (NSQTPVSRQ) are mitochondrial intermembrane. Residues 179 to 187 (NSQTPVSRQ) carry the AKR2A-binding sequence (ABS) required for mitochondrion outer membrane targeting motif.

This sequence belongs to the Tom20 family. Forms part of the preprotein translocase complex of the outer mitochondrial membrane (TOM complex) which consists of at least 6 different proteins (TOM5, TOM6, TOM7, TOM20, TOM22/TOM9 and TOM40). Interacts with a variety of mitochondrial precursor proteins. Interacts with AKR2A. Component of a mitochondrial large protein complex that contains, at least, MIC60, DGS1, TOM40, TOM20 proteins, and petC/RISP. Post-translationally, the N-terminus is blocked. As to expression, expressed in roots, flowers, young cotyledons and leaves.

The protein localises to the mitochondrion outer membrane. Central component of the receptor complex responsible for the recognition and translocation of cytosolically synthesized mitochondrial preproteins. Together with TOM22 functions as the transit peptide receptor at the surface of the mitochondrion outer membrane and facilitates the movement of preproteins into the translocation pore. The protein is Mitochondrial import receptor subunit TOM20-4 of Arabidopsis thaliana (Mouse-ear cress).